We begin with the raw amino-acid sequence, 198 residues long: MNLVPTVIEQSSRGERAYDIYSRLLKDRIIMLSGPIEDDMANAIIAQLLFLDAQDSTKDISLYINSPGGVVSSGLAIYDTMNFIQSDVQTITLGMAASMASVLASSGTKGKRFALPHAQVMIHQPSGGAQGQQTEIEIAAREILKTRELINKILAENSGQPIERLNQDTERDNYLSAQEAVDYGLIDHIMTNSSEQKK.

Serine 98 acts as the Nucleophile in catalysis. Histidine 123 is an active-site residue.

The protein belongs to the peptidase S14 family. In terms of assembly, fourteen ClpP subunits assemble into 2 heptameric rings which stack back to back to give a disk-like structure with a central cavity, resembling the structure of eukaryotic proteasomes.

It localises to the cytoplasm. The enzyme catalyses Hydrolysis of proteins to small peptides in the presence of ATP and magnesium. alpha-casein is the usual test substrate. In the absence of ATP, only oligopeptides shorter than five residues are hydrolyzed (such as succinyl-Leu-Tyr-|-NHMec, and Leu-Tyr-Leu-|-Tyr-Trp, in which cleavage of the -Tyr-|-Leu- and -Tyr-|-Trp bonds also occurs).. Functionally, cleaves peptides in various proteins in a process that requires ATP hydrolysis. Has a chymotrypsin-like activity. Plays a major role in the degradation of misfolded proteins. The chain is ATP-dependent Clp protease proteolytic subunit from Levilactobacillus brevis (strain ATCC 367 / BCRC 12310 / CIP 105137 / JCM 1170 / LMG 11437 / NCIMB 947 / NCTC 947) (Lactobacillus brevis).